A 207-amino-acid chain; its full sequence is Dephospho-CoA kinase (207 aa).

The 201-residue stretch at 4 to 204 (VVGLTGGIGS…HLYLQFAEIF (201 aa)) folds into the DPCK domain. ATP is bound at residue 12-17 (GSGKST).

Belongs to the CoaE family.

The protein localises to the cytoplasm. It catalyses the reaction 3'-dephospho-CoA + ATP = ADP + CoA + H(+). The protein operates within cofactor biosynthesis; coenzyme A biosynthesis; CoA from (R)-pantothenate: step 5/5. Functionally, catalyzes the phosphorylation of the 3'-hydroxyl group of dephosphocoenzyme A to form coenzyme A. This Aggregatibacter actinomycetemcomitans (Actinobacillus actinomycetemcomitans) protein is Dephospho-CoA kinase.